We begin with the raw amino-acid sequence, 325 residues long: Clavaminate synthase 2 (325 aa).

The Fe cation site is built by His-145, Glu-147, and His-280. Residue Arg-294 coordinates 2-oxoglutarate.

This sequence belongs to the clavaminate synthase family. Fe(2+) serves as cofactor.

It catalyses the reaction deoxyamidinoproclavaminate + 2-oxoglutarate + O2 = amidinoproclavaminate + succinate + CO2. The catalysed reaction is proclavaminate + 2-oxoglutarate + O2 = dihydroclavaminate + succinate + CO2 + H2O. The enzyme catalyses dihydroclavaminate + 2-oxoglutarate + O2 = clavaminate + succinate + CO2 + H2O. The protein operates within antibiotic biosynthesis; clavulanate biosynthesis; clavulanate from D-glyceraldehyde 3-phosphate and L-arginine: step 3/8. It functions in the pathway antibiotic biosynthesis; clavulanate biosynthesis; clavulanate from D-glyceraldehyde 3-phosphate and L-arginine: step 5/8. Its pathway is antibiotic biosynthesis; clavulanate biosynthesis; clavulanate from D-glyceraldehyde 3-phosphate and L-arginine: step 6/8. The protein is Clavaminate synthase 2 (cs2) of Streptomyces clavuligerus.